A 122-amino-acid polypeptide reads, in one-letter code: Large ribosomal subunit protein uL14 (122 aa).

Belongs to the universal ribosomal protein uL14 family. In terms of assembly, part of the 50S ribosomal subunit. Forms a cluster with proteins L3 and L19. In the 70S ribosome, L14 and L19 interact and together make contacts with the 16S rRNA in bridges B5 and B8.

In terms of biological role, binds to 23S rRNA. Forms part of two intersubunit bridges in the 70S ribosome. In Borreliella afzelii (strain PKo) (Borrelia afzelii), this protein is Large ribosomal subunit protein uL14.